The following is a 644-amino-acid chain: Macrolide export ATP-binding/permease protein MacB (644 aa).

The 239-residue stretch at 4 to 242 folds into the ABC transporter domain; it reads IECKNINRYF…SNVGRIQEKA (239 aa). Position 40-47 (40-47) interacts with ATP; the sequence is GQSGSGKS. The next 4 helical transmembrane spans lie at 270 to 290, 524 to 544, 574 to 594, and 607 to 627; these read LLTM…VALG, IALI…LVSV, LICI…SLVF, and AASV…FGFM.

Belongs to the ABC transporter superfamily. Macrolide exporter (TC 3.A.1.122) family. As to quaternary structure, homodimer.

The protein resides in the cell inner membrane. In terms of biological role, non-canonical ABC transporter that contains transmembrane domains (TMD), which form a pore in the inner membrane, and an ATP-binding domain (NBD), which is responsible for energy generation. Overexpression confers resistance against macrolides. This is Macrolide export ATP-binding/permease protein MacB from Neisseria gonorrhoeae.